A 299-amino-acid chain; its full sequence is Formin-like protein 12 (299 aa).

An FH2 domain is found at 1–295 (MASNCEKMLS…LEKRKMNIKQ (295 aa)).

Belongs to the formin-like family. Class-II subfamily.

The sequence is that of Formin-like protein 12 (FH12) from Arabidopsis thaliana (Mouse-ear cress).